Here is a 449-residue protein sequence, read N- to C-terminus: Tubulin alpha chain (449 aa).

Q11 is a binding site for GTP. K40 is subject to N6-acetyllysine. Residues E71, S140, G144, T145, T179, N206, and N228 each coordinate GTP. E71 contacts Mg(2+). Residue E254 is part of the active site.

The protein belongs to the tubulin family. Dimer of alpha and beta chains. A typical microtubule is a hollow water-filled tube with an outer diameter of 25 nm and an inner diameter of 15 nM. Alpha-beta heterodimers associate head-to-tail to form protofilaments running lengthwise along the microtubule wall with the beta-tubulin subunit facing the microtubule plus end conferring a structural polarity. Microtubules usually have 13 protofilaments but different protofilament numbers can be found in some organisms and specialized cells. Mg(2+) serves as cofactor. Undergoes a tyrosination/detyrosination cycle, the cyclic removal and re-addition of a C-terminal tyrosine residue by the enzymes tubulin tyrosine carboxypeptidase (TTCP) and tubulin tyrosine ligase (TTL), respectively. In terms of processing, some glutamate residues at the C-terminus are either polyglutamylated or polyglycylated. These 2 modifications occur exclusively on glutamate residues and result in either polyglutamate or polyglycine chains on the gamma-carboxyl group. Both modifications can coexist on the same protein on adjacent residues, and lowering polyglycylation levels increases polyglutamylation, and reciprocally. The precise function of such modifications is still unclear but they regulate the assembly and dynamics of axonemal microtubules. Post-translationally, acetylation of alpha chains at Lys-40 stabilizes microtubules and affects affinity and processivity of microtubule motors. This modification has a role in multiple cellular functions, ranging from cell motility, cell cycle progression or cell differentiation to intracellular trafficking and signaling.

The protein localises to the cytoplasm. Its subcellular location is the cytoskeleton. The catalysed reaction is GTP + H2O = GDP + phosphate + H(+). In terms of biological role, tubulin is the major constituent of microtubules, a cylinder consisting of laterally associated linear protofilaments composed of alpha- and beta-tubulin heterodimers. Microtubules grow by the addition of GTP-tubulin dimers to the microtubule end, where a stabilizing cap forms. Below the cap, tubulin dimers are in GDP-bound state, owing to GTPase activity of alpha-tubulin. This is Tubulin alpha chain from Tetrahymena thermophila.